A 159-amino-acid chain; its full sequence is Transcription elongation factor GreA (159 aa).

Positions 14–76 form a coiled coil; it reads IKKLENELEY…QLENMLKNAS (63 aa).

This sequence belongs to the GreA/GreB family.

In terms of biological role, necessary for efficient RNA polymerase transcription elongation past template-encoded arresting sites. The arresting sites in DNA have the property of trapping a certain fraction of elongating RNA polymerases that pass through, resulting in locked ternary complexes. Cleavage of the nascent transcript by cleavage factors such as GreA or GreB allows the resumption of elongation from the new 3'terminus. GreA releases sequences of 2 to 3 nucleotides. The polypeptide is Transcription elongation factor GreA (Clostridium kluyveri (strain NBRC 12016)).